Reading from the N-terminus, the 779-residue chain is MFNSTMDIDPHLRVRERMNQRKQSRSIYHSINDKKKTISRPNPSINIAIMTQTSQMKVVIVGGSIAGLTLAHCLSRYGIDYIILERRHDIAPQVGASTWDENGRLLSETDAPILTGKRLGYTITFLERETLLEILYRHLPDKSKVLTGKYVRSIEQDSKEAVVICEDGSRYSGDVIAGADGIHSTIRSEMRRQIAKEGTTKDLEALKRDEIALSAEYSCLFGISKPIPGLEIGHTHRSSGKGASTLLFGGVDGKLYWFLFTKNEERTFGDGIPRYKKGDETNHVAKYMHHHVSGNILLSEVWKNRIVANFVTIEEMENEHWNWNRVACLGDSIHKMTPNLGQGANCAIESAAEMANSLAKALRDDGSKPAIEDINSALSLYHQKRNVRANLIVKAANKFTRVEALATTGDWVASMFIIPRLGDILADRGAKVQVGATKLDCLPMPKRALEGTMPWSTNSGIGKEENRKRRAQLALPLILIALWFFWKKTPEPKGFPVTKTFSEVKLDMLSSIANAIPFATIWTIESYRRGNALTVANIFPTAFLLLAQKLGIELVAPIYFFFHYVQSPQENFAALDNRLTNIAFAKILPLAILSIFLGPSYCIWSSIELESAQWIYDNAWYWYPVYLTMFLRILKFIVKDTTRLNRIYKPTADLSYLRISYSISILICAAFYLYGSLSSSTSIAFLTQELQPPIQPIQAILGAFSELWAAKQTSLYGAAFYWTFLHFADLKFVGKSKQSWLLILTIXLSSTFLAGPGVGLIVMWAWREEIMAKKHVVPE.

4 residues coordinate FAD: E85, R128, D331, and A344. A run of 7 helical transmembrane segments spans residues 471 to 491 (AQLALPLILIALWFFWKKTPE), 504 to 524 (VKLDMLSSIANAIPFATIWTI), 542 to 562 (AFLLLAQKLGIELVAPIYFFF), 587 to 607 (ILPLAILSIFLGPSYCIWSSI), 618 to 638 (NAWYWYPVYLTMFLRILKFIV), 665 to 685 (ILICAAFYLYGSLSSSTSIAF), and 742 to 762 (LILTIXLSSTFLAGPGVGLIV).

It belongs to the paxM FAD-dependent monooxygenase family. Requires FAD as cofactor.

Its subcellular location is the membrane. It participates in polyketide biosynthesis. Functionally, FAD-dependent monooxygenase; part of the gene cluster B that mediates the biosynthesis of botcinic acid and its botcinin derivatives, acetate-derived polyketides that contribute to virulence when combined with the sesquiterpene botrydial. Botcinic acid and its derivatives have been shown to induce chlorosis and necrosis during host plant infection, but also have antifungal activities. Two polyketide synthases, BOA6 and BOA9, are involved in the biosynthesis of botcinins. BOA6 mediates the formation of the per-methylated tetraketide core by condensation of four units of malonyl-CoA with one unit of acetyl-CoA, which would be methylated in activated methylene groups to yield a bicyclic acid intermediate that could then either be converted to botrylactone derivatives or lose the starter acetate unit through a retro-Claisen type C-C bond cleavage to yield botcinin derivatives. The second polyketide synthase, BOA9, is probably required for the biosynthesis of the tetraketide side chain of botcinins. The methyltransferase (MT) domain within BOA6 is probably responsible for the incorporation of four methyl groups. The trans-enoyl reductase BOA5 might take over the enoyl reductase function of BOA6 that misses an ER domain. The monooxygenases BOA2, BOA3 and BOA4 might be involved in further hydroxylations at C4, C5 and C8, whereas BOA7, close to BOA9, could potentially be involved in the hydroxylation at C4 in the side chain of botcinins. In Botryotinia fuckeliana (strain B05.10) (Noble rot fungus), this protein is FAD-dependent monooxygenase BOA8.